Here is a 360-residue protein sequence, read N- to C-terminus: Hereditary hemochromatosis protein homolog (360 aa).

The N-terminal stretch at 1–25 (MDRSAGLPVRLLLLLLLLLLWSVAP) is a signal peptide. Residues 26 to 127 (QALRPGSHSL…KVTKLRVVPE (102 aa)) are alpha-1. The Extracellular portion of the chain corresponds to 26-319 (QALRPGSHSL…WEPSRSQDMI (294 aa)). Residues N115, N143, N167, and N247 are each glycosylated (N-linked (GlcNAc...) asparagine). The alpha-2 stretch occupies residues 128–218 (SHILQVILGC…ELQRGVLGQQ (91 aa)). Intrachain disulfides connect C137/C200 and C238/C295. An alpha-3 region spans residues 219 to 310 (VPTLVKVTRH…GLDQPLTATW (92 aa)). The Ig-like C1-type domain occupies 220-309 (PTLVKVTRHW…PGLDQPLTAT (90 aa)). The connecting peptide stretch occupies residues 311–319 (EPSRSQDMI). A helical transmembrane segment spans residues 320 to 340 (IGIISGITICAIFFVGILILV). Residues 341-360 (LRKRKVSGGTMGDYVLTECE) lie on the Cytoplasmic side of the membrane.

Belongs to the MHC class I family. In terms of assembly, binds TFR through the extracellular domain in a pH-dependent manner.

It localises to the cell membrane. Binds to transferrin receptor (TFR) and reduces its affinity for iron-loaded transferrin. The polypeptide is Hereditary hemochromatosis protein homolog (Hfe) (Rattus norvegicus (Rat)).